Here is a 259-residue protein sequence, read N- to C-terminus: MLTFVGLGLYDERSVTVAGRDAIRDADRVFAEFYTSRLIGTDIETLEDTLETSIERRDRAGIEQDPEPILEAAESEHVVFCTAGDTMVSTTHADLRLRAADRGIETRIVHGTTAQTAAGSLTGLQNYRFGKATTLPFEDAHGGDGVPDSVVATIEDNRDRDLHTLVYLDIKVDDPHWEESDDTYMTASQAATMLSEPFPDTLGVVVARAGSPDPLVAADTLDELATQTFGDPLHLLVIPGSLHPLEADTLESVAGAALE.

Residues L9, D85, V88, 113 to 114, L168, A209, and H234 each bind S-adenosyl-L-methionine; that span reads TA.

The protein belongs to the diphthine synthase family. Homodimer.

The enzyme catalyses 2-[(3S)-amino-3-carboxypropyl]-L-histidyl-[translation elongation factor 2] + 3 S-adenosyl-L-methionine = diphthine-[translation elongation factor 2] + 3 S-adenosyl-L-homocysteine + 3 H(+). The protein operates within protein modification; peptidyl-diphthamide biosynthesis. S-adenosyl-L-methionine-dependent methyltransferase that catalyzes the trimethylation of the amino group of the modified target histidine residue in translation elongation factor 2 (EF-2), to form an intermediate called diphthine. The three successive methylation reactions represent the second step of diphthamide biosynthesis. The protein is Diphthine synthase of Haloarcula marismortui (strain ATCC 43049 / DSM 3752 / JCM 8966 / VKM B-1809) (Halobacterium marismortui).